The sequence spans 191 residues: GDP-mannose pyrophosphatase (191 aa).

GDP-alpha-D-mannose is bound by residues Tyr-17, Lys-38–Glu-40, Arg-67, and Ala-85–Leu-87. In terms of domain architecture, Nudix hydrolase spans Asp-43–Leu-180. Ala-85, Glu-100, and Glu-104 together coordinate Mg(2+). The short motif at Gly-86–Gly-106 is the Nudix box element. Residues Glu-104, Glu-127, Asp-150–Glu-151, and Lys-176 contribute to the GDP-alpha-D-mannose site. Glu-151 contacts Mg(2+).

Belongs to the Nudix hydrolase family. NudK subfamily. Homodimer. It depends on Mg(2+) as a cofactor.

It catalyses the reaction GDP-alpha-D-mannose + H2O = alpha-D-mannose 1-phosphate + GMP + 2 H(+). In terms of biological role, nucleoside diphosphate sugar hydrolase that hydrolyzes GDP-mannose as its preferred substrate, yielding GMP and mannose-1-phosphate. The polypeptide is GDP-mannose pyrophosphatase (nudK) (Enterobacter sp. (strain 638)).